The chain runs to 350 residues: (RS)-norcoclaurine 6-O-methyltransferase (350 aa).

Residue Met-166 participates in S-adenosyl-L-methionine binding. Position 169 (Asp-169) interacts with substrate. Residues Thr-170, Gly-195, Asp-218, Asp-238–Met-239, and Lys-252 each bind S-adenosyl-L-methionine. Substrate is bound by residues Cys-253–Asp-257 and Asp-306. His-256 (proton acceptor) is an active-site residue.

Belongs to the class I-like SAM-binding methyltransferase superfamily. Cation-independent O-methyltransferase family. COMT subfamily. Homodimer. As to expression, expressed in leaf primordia of rhizomes and root endodermis.

It catalyses the reaction (S)-norcoclaurine + S-adenosyl-L-methionine = (S)-coclaurine + S-adenosyl-L-homocysteine + H(+). It carries out the reaction norcoclaurine + S-adenosyl-L-methionine = coclaurine + S-adenosyl-L-homocysteine + H(+). Inhibited by sanguinarine. In terms of biological role, involved in the biosynthesis of coclaurine, a precursor of benzylisoquinoline alkaloids. Catalyzes the transfer of the S-methyl group of S-adenosyl-L-methionine (AdoMet) to the 6-hydroxyl group of norcoclaurine to form coclaurine. In Thalictrum flavum subsp. glaucum (Yellow meadow rue), this protein is (RS)-norcoclaurine 6-O-methyltransferase.